The following is a 231-amino-acid chain: RING finger protein 141 (231 aa).

Glycine 2 carries the N-myristoyl glycine lipid modification. The RING-type zinc finger occupies 156 to 193; that stretch reads CCICMDGRADLILPCAHSFCQKCIDKWSDRHRNCPICR.

The protein resides in the membrane. Its function is as follows. May be involved in spermatogenesis. In Canis lupus familiaris (Dog), this protein is RING finger protein 141 (RNF141).